A 132-amino-acid polypeptide reads, in one-letter code: Cytochrome c' (132 aa).

Heme c contacts are provided by R10, Q11, D65, C122, C125, and H126.

Post-translationally, binds 1 heme c group covalently per subunit.

Functionally, cytochrome c' is the most widely occurring bacterial c-type cytochrome. Cytochromes c' are high-spin proteins and the heme has no sixth ligand. Their exact function is not known. The chain is Cytochrome c' from Halomonas halodenitrificans (strain ATCC 12084 / NCIMB 8669) (Paracoccus halodenitrificans).